The sequence spans 556 residues: Membrane protein insertase YidC (556 aa).

Helical transmembrane passes span 6–26 (IVLY…WQID), 332–352 (LDLT…FSLM), 358–378 (VVGN…LAFY), 428–448 (LGGC…YWVL), and 501–521 (VMMF…SGLV).

The protein belongs to the OXA1/ALB3/YidC family. Type 1 subfamily. In terms of assembly, interacts with the Sec translocase complex via SecD. Specifically interacts with transmembrane segments of nascent integral membrane proteins during membrane integration.

It is found in the cell inner membrane. In terms of biological role, required for the insertion and/or proper folding and/or complex formation of integral membrane proteins into the membrane. Involved in integration of membrane proteins that insert both dependently and independently of the Sec translocase complex, as well as at least some lipoproteins. Aids folding of multispanning membrane proteins. The protein is Membrane protein insertase YidC of Legionella pneumophila (strain Corby).